The primary structure comprises 560 residues: Dihydroxy-acid dehydratase (560 aa).

C52 lines the [2Fe-2S] cluster pocket. D84 is a Mg(2+) binding site. Position 125 (C125) interacts with [2Fe-2S] cluster. Mg(2+)-binding residues include D126 and K127. K127 bears the N6-carboxylysine mark. [2Fe-2S] cluster is bound at residue C197. E448 lines the Mg(2+) pocket. S474 serves as the catalytic Proton acceptor.

Belongs to the IlvD/Edd family. In terms of assembly, homodimer. It depends on [2Fe-2S] cluster as a cofactor. Requires Mg(2+) as cofactor.

The enzyme catalyses (2R)-2,3-dihydroxy-3-methylbutanoate = 3-methyl-2-oxobutanoate + H2O. It carries out the reaction (2R,3R)-2,3-dihydroxy-3-methylpentanoate = (S)-3-methyl-2-oxopentanoate + H2O. Its pathway is amino-acid biosynthesis; L-isoleucine biosynthesis; L-isoleucine from 2-oxobutanoate: step 3/4. The protein operates within amino-acid biosynthesis; L-valine biosynthesis; L-valine from pyruvate: step 3/4. In terms of biological role, functions in the biosynthesis of branched-chain amino acids. Catalyzes the dehydration of (2R,3R)-2,3-dihydroxy-3-methylpentanoate (2,3-dihydroxy-3-methylvalerate) into 2-oxo-3-methylpentanoate (2-oxo-3-methylvalerate) and of (2R)-2,3-dihydroxy-3-methylbutanoate (2,3-dihydroxyisovalerate) into 2-oxo-3-methylbutanoate (2-oxoisovalerate), the penultimate precursor to L-isoleucine and L-valine, respectively. This chain is Dihydroxy-acid dehydratase, found in Leptospira borgpetersenii serovar Hardjo-bovis (strain JB197).